The following is a 124-amino-acid chain: NADH dehydrogenase [ubiquinone] 1 alpha subcomplex subunit 6 (124 aa).

Belongs to the complex I LYR family.

Its subcellular location is the mitochondrion inner membrane. Accessory subunit of the mitochondrial membrane respiratory chain NADH dehydrogenase (Complex I), that is believed to be not involved in catalysis. Complex I functions in the transfer of electrons from NADH to the respiratory chain. The immediate electron acceptor for the enzyme is believed to be ubiquinone. The chain is NADH dehydrogenase [ubiquinone] 1 alpha subcomplex subunit 6 (ndufa6) from Dictyostelium discoideum (Social amoeba).